A 313-amino-acid polypeptide reads, in one-letter code: 18S rRNA aminocarboxypropyltransferase (313 aa).

Residues 1–30 form a disordered region; sequence MGKGKNKMHEPKNGRPQRGANGHSSRQNHR. Ser-62, Val-110, Leu-133, and Trp-148 together coordinate S-adenosyl-L-methionine. Positions 215 to 228 are enriched in basic and acidic residues; it reads KETQERKSRAKEED. The disordered stretch occupies residues 215–313; the sequence is KETQERKSRA…SYDPLGNLIR (99 aa). The segment covering 237–246 has biased composition (polar residues); that stretch reads RRGNGSQSDT. Positions 247–257 are enriched in acidic residues; the sequence is SESEENSEQSD. 2 positions are modified to phosphoserine: Ser-286 and Ser-289.

Belongs to the TDD superfamily. TSR3 family.

It localises to the cytoplasm. It is found in the nucleus. It carries out the reaction an N(1)-methylpseudouridine in rRNA + S-adenosyl-L-methionine = N(1)-methyl-N(3)-[(3S)-3-amino-3-carboxypropyl]pseudouridine in rRNA + S-methyl-5'-thioadenosine + H(+). The catalysed reaction is N(1)-methylpseudouridine(1191) in yeast 18S rRNA + S-adenosyl-L-methionine = N(1)-methyl-N(3)-[(3S)-3-amino-3-carboxypropyl]pseudouridine(1191) in yeast 18S rRNA + S-methyl-5'-thioadenosine + H(+). In terms of biological role, aminocarboxypropyltransferase that catalyzes the aminocarboxypropyl transfer on pseudouridine at position 1191 (Psi1191) in 18S rRNA. It constitutes the last step in biosynthesis of the hypermodified N1-methyl-N3-(3-amino-3-carboxypropyl) pseudouridine (m1acp3-Psi) conserved in eukaryotic 18S rRNA. Required for processing 35S pre-rRNA at site D. This Saccharomyces cerevisiae (strain ATCC 204508 / S288c) (Baker's yeast) protein is 18S rRNA aminocarboxypropyltransferase.